The primary structure comprises 209 residues: MKGVTVVDHPLVQHKLTIMRKKETSTAGFRRLLREISLLLGYEVTRNLELTTTTIETPIETMEAPTLEGKKLVFASVLRAGNGLLEGLLDLVPAARVAHIGLYRDHETLEAVEYFFKAPSDLADRLVIVVDPMLATANSAIAAIDKLKGRGATNIRFLCLLAAPEGIERFTKAHPDVPVFTASIDRQLNEKGYIMPGLGDAGDRMYGTK.

Residues Arg79, Arg104, and Asp131–Ser139 contribute to the 5-phospho-alpha-D-ribose 1-diphosphate site. Uracil-binding positions include Ile194 and Gly199 to Ala201. Asp200 lines the 5-phospho-alpha-D-ribose 1-diphosphate pocket.

Belongs to the UPRTase family. Requires Mg(2+) as cofactor.

The enzyme catalyses UMP + diphosphate = 5-phospho-alpha-D-ribose 1-diphosphate + uracil. It functions in the pathway pyrimidine metabolism; UMP biosynthesis via salvage pathway; UMP from uracil: step 1/1. With respect to regulation, allosterically activated by GTP. Functionally, catalyzes the conversion of uracil and 5-phospho-alpha-D-ribose 1-diphosphate (PRPP) to UMP and diphosphate. The protein is Uracil phosphoribosyltransferase of Mesorhizobium japonicum (strain LMG 29417 / CECT 9101 / MAFF 303099) (Mesorhizobium loti (strain MAFF 303099)).